Reading from the N-terminus, the 232-residue chain is GFP-like fluorescent chromoprotein dsFP483 (232 aa).

Positions 66–68 form a cross-link, 2-iminomethyl-5-imidazolinone (Gln-Gly); that stretch reads QYG. Tyr67 carries the post-translational modification 2,3-didehydrotyrosine.

It belongs to the GFP family. Contains a chromophore consisting of modified amino acid residues. The chromophore is formed by autocatalytic backbone condensation between Xaa-N and Gly-(N+2), oxidation of Tyr-(N+1) to didehydrotyrosine, and formation of a double bond to the alpha-amino nitrogen of residue Xaa-N. Maturation of the chromophore requires nothing other than molecular oxygen. The precise stereochemistry of the tyrosine has not been determined. As to expression, oral disk.

Functionally, pigment protein that is green in color. This is GFP-like fluorescent chromoprotein dsFP483 from Discosoma striata (Striped mushroom).